Here is a 421-residue protein sequence, read N- to C-terminus: Putative transporter AmpG 3 (421 aa).

A run of 12 helical transmembrane segments spans residues 6 to 26 (YLIGILLLGLISGLTFNLIFF), 41 to 61 (IIGAISLAAFPYCLKVIWSPF), 80 to 100 (WALVSQIFLILAMMWFLKRSP), 104 to 124 (LCITAIILFIIAFFSSTQDIV), 139 to 159 (LSIVFTFSSIGFRLGMLLGSV), 166 to 186 (IIFGWNTVYKFALFITMVGPI), 230 to 250 (LLLIILFVFLYKAADSIPMAM), 274 to 294 (LLIMIVGGTLGGILAAKIGIF), 297 to 317 (VLIGGVIQLLSPLMFMILATI), 324 to 344 (FIITITIQNFCSGFAGTIISI), 360 to 380 (AISASFSSLSRIILASLGGIC), and 388 to 408 (VFFLCNTLFSMLFIPIFYTIY).

Belongs to the major facilitator superfamily.

The protein localises to the cell inner membrane. The polypeptide is Putative transporter AmpG 3 (ampG3) (Rickettsia prowazekii (strain Madrid E)).